Reading from the N-terminus, the 1317-residue chain is uncharacterized protein (1317 aa).

This sequence belongs to the oxoprolinase family.

This is an uncharacterized protein from Schizosaccharomyces pombe (strain 972 / ATCC 24843) (Fission yeast).